The following is a 225-amino-acid chain: UPF0758 protein Ssed_0385 (225 aa).

Positions 102–224 (ILSDPDLTRD…IVSFAERGWI (123 aa)) constitute an MPN domain. Histidine 173, histidine 175, and aspartate 186 together coordinate Zn(2+). Residues 173–186 (HNHPSGVAEPSLAD) carry the JAMM motif motif.

This sequence belongs to the UPF0758 family.

This chain is UPF0758 protein Ssed_0385, found in Shewanella sediminis (strain HAW-EB3).